The chain runs to 285 residues: Bifunctional protein FolD (285 aa).

NADP(+)-binding positions include glycine 165–serine 167 and serine 190.

The protein belongs to the tetrahydrofolate dehydrogenase/cyclohydrolase family. As to quaternary structure, homodimer.

It carries out the reaction (6R)-5,10-methylene-5,6,7,8-tetrahydrofolate + NADP(+) = (6R)-5,10-methenyltetrahydrofolate + NADPH. The catalysed reaction is (6R)-5,10-methenyltetrahydrofolate + H2O = (6R)-10-formyltetrahydrofolate + H(+). It functions in the pathway one-carbon metabolism; tetrahydrofolate interconversion. Its function is as follows. Catalyzes the oxidation of 5,10-methylenetetrahydrofolate to 5,10-methenyltetrahydrofolate and then the hydrolysis of 5,10-methenyltetrahydrofolate to 10-formyltetrahydrofolate. The protein is Bifunctional protein FolD of Burkholderia thailandensis (strain ATCC 700388 / DSM 13276 / CCUG 48851 / CIP 106301 / E264).